The chain runs to 380 residues: Putative zinc finger protein C02F5.12 (380 aa).

The tract at residues 137-187 is disordered; the sequence is NLDIPGTSSDIPSDPSSALKVPKKEVLDESEEILDQTSGSSSFSLNDSEQA. Composition is skewed to polar residues over residues 142 to 152 and 171 to 187; these read GTSSDIPSDPS and DQTS…SEQA. Residues 271-294 form a C2H2-type zinc finger; it reads IPCKLCGFECTNVRRMRSHYAKAH.

Its subcellular location is the nucleus. This is Putative zinc finger protein C02F5.12 from Caenorhabditis elegans.